The primary structure comprises 251 residues: Pyrroloquinoline-quinone synthase (251 aa).

This sequence belongs to the PqqC family.

The enzyme catalyses 6-(2-amino-2-carboxyethyl)-7,8-dioxo-1,2,3,4,7,8-hexahydroquinoline-2,4-dicarboxylate + 3 O2 = pyrroloquinoline quinone + 2 H2O2 + 2 H2O + H(+). It functions in the pathway cofactor biosynthesis; pyrroloquinoline quinone biosynthesis. In terms of biological role, ring cyclization and eight-electron oxidation of 3a-(2-amino-2-carboxyethyl)-4,5-dioxo-4,5,6,7,8,9-hexahydroquinoline-7,9-dicarboxylic-acid to PQQ. The chain is Pyrroloquinoline-quinone synthase from Pseudomonas entomophila (strain L48).